A 140-amino-acid chain; its full sequence is ATP synthase epsilon chain (140 aa).

This sequence belongs to the ATPase epsilon chain family. As to quaternary structure, F-type ATPases have 2 components, CF(1) - the catalytic core - and CF(0) - the membrane proton channel. CF(1) has five subunits: alpha(3), beta(3), gamma(1), delta(1), epsilon(1). CF(0) has three main subunits: a, b and c.

The protein resides in the cell inner membrane. Functionally, produces ATP from ADP in the presence of a proton gradient across the membrane. The chain is ATP synthase epsilon chain from Xanthomonas oryzae pv. oryzae (strain PXO99A).